The chain runs to 159 residues: Succinate dehydrogenase assembly factor 2, mitochondrial (159 aa).

A mitochondrion-targeting transit peptide spans 1 to 14; the sequence is MASFCLSRCCALRG.

Belongs to the SDHAF2 family. As to quaternary structure, interacts with the flavoprotein subunit within the SDH catalytic dimer.

It localises to the mitochondrion matrix. Functionally, plays an essential role in the assembly of succinate dehydrogenase (SDH), an enzyme complex (also referred to as respiratory complex II) that is a component of both the tricarboxylic acid (TCA) cycle and the mitochondrial electron transport chain, and which couples the oxidation of succinate to fumarate with the reduction of ubiquinone (coenzyme Q) to ubiquinol. Required for flavinylation (covalent attachment of FAD) of the flavoprotein subunit of the SDH catalytic dimer. This is Succinate dehydrogenase assembly factor 2, mitochondrial from Culex quinquefasciatus (Southern house mosquito).